The chain runs to 207 residues: Protein GrpE (207 aa).

Positions 1 to 11 (MTETDGQKDNN) are enriched in basic and acidic residues. The tract at residues 1-39 (MTETDGQKDNNQDTAQAAADPVVSKPYIMPDDPEEGSNE) is disordered.

Belongs to the GrpE family. In terms of assembly, homodimer.

The protein localises to the cytoplasm. In terms of biological role, participates actively in the response to hyperosmotic and heat shock by preventing the aggregation of stress-denatured proteins, in association with DnaK and GrpE. It is the nucleotide exchange factor for DnaK and may function as a thermosensor. Unfolded proteins bind initially to DnaJ; upon interaction with the DnaJ-bound protein, DnaK hydrolyzes its bound ATP, resulting in the formation of a stable complex. GrpE releases ADP from DnaK; ATP binding to DnaK triggers the release of the substrate protein, thus completing the reaction cycle. Several rounds of ATP-dependent interactions between DnaJ, DnaK and GrpE are required for fully efficient folding. This Rhodopseudomonas palustris (strain TIE-1) protein is Protein GrpE.